Reading from the N-terminus, the 831-residue chain is Probable beta-glucosidase H (831 aa).

An N-linked (GlcNAc...) asparagine glycan is attached at Asn13. Asp225 is a catalytic residue. The PA14 domain maps to 389–549 (RLLSNAVIHF…DAEEMINRAV (161 aa)). Residues Asn474, Asn514, Asn604, Asn629, Asn726, and Asn823 are each glycosylated (N-linked (GlcNAc...) asparagine).

It belongs to the glycosyl hydrolase 3 family.

It is found in the secreted. It catalyses the reaction Hydrolysis of terminal, non-reducing beta-D-glucosyl residues with release of beta-D-glucose.. Its pathway is glycan metabolism; cellulose degradation. In terms of biological role, beta-glucosidases are one of a number of cellulolytic enzymes involved in the degradation of cellulosic biomass. Catalyzes the last step releasing glucose from the inhibitory cellobiose. This chain is Probable beta-glucosidase H (bglH), found in Emericella nidulans (strain FGSC A4 / ATCC 38163 / CBS 112.46 / NRRL 194 / M139) (Aspergillus nidulans).